The following is a 248-amino-acid chain: MRVDGRESNALRNIEVTPDYLMHPEGSVLIASGNTKVICSASVETKVPPFMRGEGRGWISAEYSMLPRATNTRNIRESSKGKVTGRTMEIQRLIGRALRAVVDLDALGERTIWLDCDVIQADGGTRTASITGAFIAMVMAIAKLDEAVPFAKFPVKDFLAATSVGVLEEGGTVLDLNYVEDSAAQVDMNIIMTGSGAFVELQGTGEEATFSETELAELIALGKKGISELIEIQKETLGDKVTARIKGE.

Phosphate is bound by residues Arg-86 and Gly-124 to Arg-126.

This sequence belongs to the RNase PH family. In terms of assembly, homohexameric ring arranged as a trimer of dimers.

It carries out the reaction tRNA(n+1) + phosphate = tRNA(n) + a ribonucleoside 5'-diphosphate. Its function is as follows. Phosphorolytic 3'-5' exoribonuclease that plays an important role in tRNA 3'-end maturation. Removes nucleotide residues following the 3'-CCA terminus of tRNAs; can also add nucleotides to the ends of RNA molecules by using nucleoside diphosphates as substrates, but this may not be physiologically important. Probably plays a role in initiation of 16S rRNA degradation (leading to ribosome degradation) during starvation. The chain is Ribonuclease PH from Listeria monocytogenes serotype 4b (strain CLIP80459).